The chain runs to 79 residues: Darcynin (79 aa).

Belongs to the darcynin family.

This is Darcynin from Chromobacterium violaceum (strain ATCC 12472 / DSM 30191 / JCM 1249 / CCUG 213 / NBRC 12614 / NCIMB 9131 / NCTC 9757 / MK).